The primary structure comprises 395 residues: Chalcone synthase 1 (395 aa).

Residue Val-2 is modified to N-acetylvaline. Cys-169 is an active-site residue.

Belongs to the thiolase-like superfamily. Chalcone/stilbene synthases family.

The enzyme catalyses (E)-4-coumaroyl-CoA + 3 malonyl-CoA + 3 H(+) = 2',4,4',6'-tetrahydroxychalcone + 3 CO2 + 4 CoA. It functions in the pathway secondary metabolite biosynthesis; flavonoid biosynthesis. Its function is as follows. The primary product of this enzyme is 4,2',4',6'-tetrahydroxychalcone (also termed naringenin-chalcone or chalcone) which can under specific conditions spontaneously isomerize into naringenin. This is Chalcone synthase 1 (CHS1) from Sinapis alba (White mustard).